A 346-amino-acid chain; its full sequence is Low-temperature-induced cysteine proteinase (346 aa).

A propeptide spans 1 to 17 (activation peptide); the sequence is KLSKNKSDRYLPKVGDS. 5 cysteine pairs are disulfide-bonded: Cys-39/Cys-81, Cys-73/Cys-114, Cys-172/Cys-223, Cys-256/Cys-268, and Cys-262/Cys-283. Cys-42 is an active-site residue. Catalysis depends on residues His-178 and Asn-198. The N-linked (GlcNAc...) asparagine glycan is linked to Asn-215. A propeptide spans 238 to 346 (removed in mature form); sequence NPPKPAPSPP…FGNGGKKSSS (109 aa).

The protein belongs to the peptidase C1 family.

The protein is Low-temperature-induced cysteine proteinase of Solanum lycopersicum (Tomato).